The chain runs to 97 residues: MSKITAKDVRKVAQLARLDLPDDQIATYTEQLERILAYVAQLEEIDTTNVKPTTRAVEVVNVTRTDEVSETPVREELLNLAPQREGDFFRVPKILAE.

Belongs to the GatC family. As to quaternary structure, heterotrimer of A, B and C subunits.

The enzyme catalyses L-glutamyl-tRNA(Gln) + L-glutamine + ATP + H2O = L-glutaminyl-tRNA(Gln) + L-glutamate + ADP + phosphate + H(+). It catalyses the reaction L-aspartyl-tRNA(Asn) + L-glutamine + ATP + H2O = L-asparaginyl-tRNA(Asn) + L-glutamate + ADP + phosphate + 2 H(+). Functionally, allows the formation of correctly charged Asn-tRNA(Asn) or Gln-tRNA(Gln) through the transamidation of misacylated Asp-tRNA(Asn) or Glu-tRNA(Gln) in organisms which lack either or both of asparaginyl-tRNA or glutaminyl-tRNA synthetases. The reaction takes place in the presence of glutamine and ATP through an activated phospho-Asp-tRNA(Asn) or phospho-Glu-tRNA(Gln). In Prochlorococcus marinus (strain MIT 9313), this protein is Aspartyl/glutamyl-tRNA(Asn/Gln) amidotransferase subunit C.